We begin with the raw amino-acid sequence, 163 residues long: C-type lectin lectoxin-Lio1 (163 aa).

The first 21 residues, 1–21 (MERFIFAALLVVALSLSGTGA), serve as a signal peptide directing secretion. Intrachain disulfides connect cysteine 25-cysteine 36, cysteine 53-cysteine 152, and cysteine 127-cysteine 144. In terms of domain architecture, C-type lectin spans 32-153 (SDGYCYKVFK…CRSKRYFICK (122 aa)). A Mannose-binding motif is present at residues 117 to 119 (EPN). Residues glutamate 125 and aspartate 141 each coordinate Ca(2+).

Belongs to the true venom lectin family. As to expression, expressed by the venom gland.

Its subcellular location is the secreted. Mannose-binding lectin which recognizes specific carbohydrate structures and agglutinates a variety of animal cells by binding to cell-surface glycoproteins and glycolipids. May be a calcium-dependent lectin. The sequence is that of C-type lectin lectoxin-Lio1 from Erythrolamprus poecilogyrus (Water snake).